A 193-amino-acid polypeptide reads, in one-letter code: Peptidyl-tRNA hydrolase (193 aa).

Tyr16 is a binding site for tRNA. Residue His21 is the Proton acceptor of the active site. TRNA-binding residues include Phe67, Asn69, and Asn115.

Belongs to the PTH family. As to quaternary structure, monomer.

Its subcellular location is the cytoplasm. It carries out the reaction an N-acyl-L-alpha-aminoacyl-tRNA + H2O = an N-acyl-L-amino acid + a tRNA + H(+). Hydrolyzes ribosome-free peptidyl-tRNAs (with 1 or more amino acids incorporated), which drop off the ribosome during protein synthesis, or as a result of ribosome stalling. In terms of biological role, catalyzes the release of premature peptidyl moieties from peptidyl-tRNA molecules trapped in stalled 50S ribosomal subunits, and thus maintains levels of free tRNAs and 50S ribosomes. This chain is Peptidyl-tRNA hydrolase, found in Vesicomyosocius okutanii subsp. Calyptogena okutanii (strain HA).